A 268-amino-acid chain; its full sequence is Probable intron-encoded DNA endonuclease 1 (268 aa).

Belongs to the LAGLIDADG endonuclease family.

Its subcellular location is the mitochondrion. In terms of biological role, mitochondrial DNA endonuclease involved in intron homing. This is Probable intron-encoded DNA endonuclease 1 (hegI1) from Mycosarcoma maydis (Corn smut fungus).